The chain runs to 247 residues: Transcription factor otaR1 (247 aa).

Disordered regions lie at residues 1–48 and 100–143; these read MEPA…ETSM and DNAS…PLGN. A compositionally biased stretch (low complexity) spans 23-47; the sequence is DESSSTGLSLGSLLSSSNDLSSETS. The segment covering 134–143 has biased composition (polar residues); the sequence is ANPTSVPLGN. Residues 156–196 are basic motif; that stretch reads KKYHEKYKERNRVAAGKSRQKQVDLIELLQAEQREEERRRK. The bZIP domain maps to 156 to 219; the sequence is KKYHEKYKER…LDLKQELQHH (64 aa). The leucine-zipper stretch occupies residues 198–212; the sequence is LERELSQIHKELLDL.

It localises to the nucleus. Transcription factor; part of the gene cluster that mediates the biosynthesis of ochratoxin A (OTA), a mycotoxin demonstrated to have nephrotoxic, immunotoxic, genotoxic, neurotoxic, and teratogenic properties. Positively regulates the expression of the cluster genes otaA, otaB, otaC and otaD, and the subsequent production of OTA. The polypeptide is Transcription factor otaR1 (Aspergillus carbonarius (strain ITEM 5010)).